A 718-amino-acid chain; its full sequence is Quinohemoprotein alcohol dehydrogenase ADH-IIG (718 aa).

A signal peptide spans 1-29 (MRQTGLASLPLKSLAVAVLLSLAGTPALA). Glutamate 92 contributes to the pyrroloquinoline quinone binding site. A disulfide bond links cysteine 138 and cysteine 139. Pyrroloquinoline quinone contacts are provided by residues arginine 144, threonine 189, and 205-206 (GA). A Ca(2+)-binding site is contributed by glutamate 207. Threonine 264 contributes to the pyrroloquinoline quinone binding site. Residues asparagine 284 and aspartate 329 each contribute to the Ca(2+) site. Aspartate 329 serves as the catalytic Proton acceptor. Pyrroloquinoline quinone is bound at residue lysine 356. Tryptophan 415 is a binding site for substrate. Pyrroloquinoline quinone is bound by residues 419–420 (DW) and alanine 571. Residues 622 to 699 (ASIEAGAKLY…QIHQYLIKRA (78 aa)) enclose the Cytochrome c domain. Residues cysteine 635, cysteine 638, histidine 639, and methionine 676 each coordinate heme c.

The protein belongs to the bacterial PQQ dehydrogenase family. In terms of assembly, monomer. Pyrroloquinoline quinone serves as cofactor. Ca(2+) is required as a cofactor. The cofactor is heme c.

It is found in the periplasm. It catalyses the reaction 2 oxidized [azurin] + a primary alcohol = 2 reduced [azurin] + an aldehyde + 2 H(+). Exhibits higher affinity for 1-butanol compared to 1,2-propanediol but inhibited by 10 mM 1-butanol. Catalyzes the dye-linked oxidation of primary alcohols to the corresponding aldehydes and the (subsequent) oxidation of the aldehydes to carboxylic acids. Active with primary alcohols, glycerol, 1,2-propanediol, 1,3-propanediol but not with methanol or sugar alcohols such as D-sorbitol. This Pseudomonas putida (Arthrobacter siderocapsulatus) protein is Quinohemoprotein alcohol dehydrogenase ADH-IIG.